We begin with the raw amino-acid sequence, 508 residues long: Light-independent protochlorophyllide reductase subunit B (508 aa).

D36 provides a ligand contact to [4Fe-4S] cluster. Catalysis depends on D294, which acts as the Proton donor. 429–430 contributes to the substrate binding site; the sequence is GM.

Belongs to the ChlB/BchB/BchZ family. Protochlorophyllide reductase is composed of three subunits; ChlL, ChlN and ChlB. Forms a heterotetramer of two ChlB and two ChlN subunits. The cofactor is [4Fe-4S] cluster.

It carries out the reaction chlorophyllide a + oxidized 2[4Fe-4S]-[ferredoxin] + 2 ADP + 2 phosphate = protochlorophyllide a + reduced 2[4Fe-4S]-[ferredoxin] + 2 ATP + 2 H2O. The protein operates within porphyrin-containing compound metabolism; chlorophyll biosynthesis (light-independent). Its function is as follows. Component of the dark-operative protochlorophyllide reductase (DPOR) that uses Mg-ATP and reduced ferredoxin to reduce ring D of protochlorophyllide (Pchlide) to form chlorophyllide a (Chlide). This reaction is light-independent. The NB-protein (ChlN-ChlB) is the catalytic component of the complex. This chain is Light-independent protochlorophyllide reductase subunit B, found in Nostoc punctiforme (strain ATCC 29133 / PCC 73102).